Here is a 509-residue protein sequence, read N- to C-terminus: 5-hydroxytryptamine receptor (509 aa).

Topologically, residues 1-99 are extracellular; the sequence is MANFTFGDLA…YSHEHLVLTS (99 aa). N-linked (GlcNAc...) asparagine glycosylation is found at Asn-3, Asn-47, Asn-58, Asn-68, Asn-72, and Asn-78. A helical membrane pass occupies residues 100 to 122; sequence VILGLFVLCCIIGNCFVIAAVML. Residues 123-132 are Cytoplasmic-facing; it reads ERSLHNVANY. A helical membrane pass occupies residues 133–154; that stretch reads LILSLAVADLMVAVLVMPLSVV. Residues 155-169 lie on the Extracellular side of the membrane; it reads SEISKVWFLHSEVCD. A disulfide bridge connects residues Cys-168 and Cys-246. The helical transmembrane segment at 170 to 191 threads the bilayer; that stretch reads MWISVDVLCCTASILHLVAIAM. At 192–210 the chain is on the cytoplasmic side; that stretch reads DRYWAVTSIDYIRRRSARR. Residues 211–233 form a helical membrane-spanning segment; that stretch reads ILLMIMVVWIVALFISIPPLFGW. Residues 234–259 lie on the Extracellular side of the membrane; sequence RDPNNDPDKTGTCIISQDKGYTIFST. A helical membrane pass occupies residues 260 to 281; it reads VGAFYLPMLVMMIIYIRIWLVA. Topologically, residues 282 to 432 are cytoplasmic; it reads RSRIRKDKFQ…LKRERKAART (151 aa). The segment at 323–372 is disordered; that stretch reads SPDSTTEKKKRRAPFKSYGCSPRPERKKNRAKKLPENANGVNSNSSSSER. A helical membrane pass occupies residues 433–456; sequence LAIITGAFLICWLPFFIIALIGPF. Over 457–465 the chain is Extracellular; sequence VDPEGIPPF. The chain crosses the membrane as a helical span at residues 466 to 488; sequence ARSFVLWLGYFNSLLNPIIYTIF. Topologically, residues 489–509 are cytoplasmic; it reads SPEFRSAFQKILFGKYRRGHR.

Belongs to the G-protein coupled receptor 1 family.

The protein localises to the cell membrane. Its function is as follows. This is a receptor for 5-hydroxytryptamine (serotonin), a biogenic hormone that function as a neurotransmitter, a hormone, and a mitogen. In Lymnaea stagnalis (Great pond snail), this protein is 5-hydroxytryptamine receptor.